Here is a 335-residue protein sequence, read N- to C-terminus: Galactinol synthase 2 (335 aa).

Residue Lys103 is part of the active site. Mn(2+) contacts are provided by Asp119, Asp121, and His257.

It belongs to the glycosyltransferase 8 family. Galactosyltransferase subfamily. A divalent metal cation serves as cofactor. Accumulates in mature seeds.

The protein localises to the cytoplasm. The enzyme catalyses myo-inositol + UDP-alpha-D-galactose = alpha-D-galactosyl-(1-&gt;3)-1D-myo-inositol + UDP + H(+). Functionally, galactinol synthase involved in the biosynthesis of raffinose family oligosaccharides (RFOs) that function as osmoprotectants. Promotes stress tolerance of factors such as drought, chilling, salinity and methylviologen (MV), a superoxide radical generating drug, by mediating an increase in levels of the endogenous osmoprotective compounds, galactinol and raffinose. The protein is Galactinol synthase 2 (GOLS2) of Arabidopsis thaliana (Mouse-ear cress).